The sequence spans 332 residues: Formamidase (332 aa).

In terms of domain architecture, CN hydrolase spans 14–259 (FLTALIQYPV…WEIVTAEVYP (246 aa)). Glutamate 60 functions as the Proton acceptor in the catalytic mechanism. Lysine 132 functions as the Proton donor in the catalytic mechanism. The active-site Nucleophile is cysteine 165.

The protein belongs to the carbon-nitrogen hydrolase superfamily. Aliphatic amidase family.

The catalysed reaction is formamide + H2O = formate + NH4(+). In terms of biological role, is an aliphatic amidase with a restricted substrate specificity, as it only hydrolyzes formamide. This is Formamidase from Bacillus cereus (strain G9842).